The primary structure comprises 633 residues: DNA mismatch repair protein MutL (633 aa).

2 disordered regions span residues 336–364 and 384–405; these read VRPD…GEFG and GWSG…TRPE. The segment covering 388 to 401 has biased composition (low complexity); the sequence is GASSSGASSGYSAY.

It belongs to the DNA mismatch repair MutL/HexB family.

In terms of biological role, this protein is involved in the repair of mismatches in DNA. It is required for dam-dependent methyl-directed DNA mismatch repair. May act as a 'molecular matchmaker', a protein that promotes the formation of a stable complex between two or more DNA-binding proteins in an ATP-dependent manner without itself being part of a final effector complex. This is DNA mismatch repair protein MutL from Pseudomonas paraeruginosa (strain DSM 24068 / PA7) (Pseudomonas aeruginosa (strain PA7)).